Here is a 43-residue protein sequence, read N- to C-terminus: Protein PsbN (43 aa).

The chain crosses the membrane as a helical span at residues 7–27 (IAIFISCLIVSFTGYALYTAF).

Belongs to the PsbN family.

The protein localises to the plastid. It localises to the chloroplast thylakoid membrane. Functionally, may play a role in photosystem I and II biogenesis. The polypeptide is Protein PsbN (Psilotum nudum (Whisk fern)).